Consider the following 1757-residue polypeptide: Serine/threonine-protein kinase WNK3 (1757 aa).

A disordered region spans residues 1–25; it reads MATDSGEPASTEDSEKPDGVSFENR. Ser62 carries the post-translational modification Phosphoserine. Residues 66 to 82 show a composition bias toward basic and acidic residues; the sequence is TEDDKVAESSRRDERKA. The interval 66–85 is disordered; it reads TEDDKVAESSRRDERKAATN. The region spanning 146 to 404 is the Protein kinase domain; that stretch reads LKFDIELGRG…IKDLLNHAFF (259 aa). Residues 226 to 229 and Lys276 each bind ATP; that span reads TELM. The active-site Proton acceptor is Asp293. 2 positions are modified to phosphoserine; by autocatalysis: Ser303 and Ser307. Residues 536 to 546 are interaction with KLHL3; the sequence is EYEETEVDQHV. A Phosphothreonine modification is found at Thr540. Polar residues-rich tracts occupy residues 551 to 570, 578 to 604, and 674 to 689; these read LQGKPQQQSSSVRGDTSSEP, SDTSSHPTVAYSSNQTTSSQEQPKLTQ, and SVKENTNNPDTPSGNG. Disordered regions lie at residues 551 to 604 and 674 to 705; these read LQGK…KLTQ and SVKENTNNPDTPSGNGKQDRNKQRRASCPRPE. Phosphoserine is present on Ser1039. Residues 1404-1422 show a composition bias toward polar residues; the sequence is VATEKNVTSTTEVSVQSGS. 3 disordered regions span residues 1404–1440, 1479–1498, and 1536–1574; these read VATEKNVTSTTEVSVQSGSEPLDKEKNESTPGKQTCT, SLFYSPSSPMSSDNESEIED, and ATKDNKAQSSEVPLSPASPRRPRSFKSKLRSRPQSMTHS. Positions 1479 to 1491 are enriched in low complexity; it reads SLFYSPSSPMSSD. Ser1550 and Ser1553 each carry phosphoserine. Residues 1555-1566 show a composition bias toward basic residues; it reads RRPRSFKSKLRS. The residue at position 1595 (Ser1595) is a Phosphoserine. 2 disordered regions span residues 1621-1650 and 1734-1757; these read HFPSKPSLNQLKQSQQKSEAENWNKSCEST and PGMNLQSFPAPPVQNPASIPPGPK. The span at 1624 to 1637 shows a compositional bias: low complexity; it reads SKPSLNQLKQSQQK. Residues 1641-1650 show a composition bias toward polar residues; the sequence is ENWNKSCEST. Positions 1742–1757 are enriched in pro residues; that stretch reads PAPPVQNPASIPPGPK.

The protein belongs to the protein kinase superfamily. Ser/Thr protein kinase family. WNK subfamily. In terms of assembly, interacts with WNK1 and WNK4. Requires Mg(2+) as cofactor. In terms of processing, autophosphorylated at Ser-303 and Ser-307, promoting its activity. Phosphorylation at Thr-540 prevents interaction with KLHL3 and subsequent ubiquitination and degradation by the BCR(KLHL3) complex. Post-translationally, ubiquitinated by the BCR(KLHL2) complex, leading to its degradation. Ubiquitinated by the BCR(KLHL3) complex, leading to its degradation. Expressed in pancreatic duct.

It localises to the cytoplasm. The enzyme catalyses L-seryl-[protein] + ATP = O-phospho-L-seryl-[protein] + ADP + H(+). It carries out the reaction L-threonyl-[protein] + ATP = O-phospho-L-threonyl-[protein] + ADP + H(+). With respect to regulation, activated in response to hyperosmotic stress: cell shrinkage promotes formation of a membraneless compartment that concentrates WNK3 with its substrates, OXSR1/OSR1 and STK39/SPAK. Activation requires autophosphorylation of Ser-307 and, to a lower extent, Ser-303. Autophosphorylation and subsequent activation is inhibited by increases in intracellular ionic strength: Cl(-) potently inhibits WNK3 kinase activity via direct binding. Also inhibited by K(+) ions. Kinase activity is inhibited by WNK4. Functionally, serine/threonine-protein kinase component of the WNK3-SPAK/OSR1 kinase cascade, which plays an important role in the regulation of electrolyte homeostasis and regulatory volume increase in response to hyperosmotic stress. WNK3 mediates regulatory volume increase in response to hyperosmotic stress by acting as a molecular crowding sensor, which senses cell shrinkage and mediates formation of a membraneless compartment by undergoing liquid-liquid phase separation. The membraneless compartment concentrates WNK3 with its substrates, OXSR1/OSR1 and STK39/SPAK, promoting WNK3-dependent phosphorylation and activation of downstream kinases OXSR1/OSR1 and STK39/SPAK. Following activation, OXSR1/OSR1 and STK39/SPAK catalyze phosphorylation of ion cotransporters SLC12A1/NKCC2, SLC12A2/NKCC1, SLC12A3/NCC, SLC12A4/KCC1, SLC12A5/KCC2 or SLC12A6/KCC3, regulating their activity. Phosphorylation of Na-K-Cl cotransporters SLC12A2/NKCC1 and SLC12A2/NKCC1 promote their activation and ion influx; simultaneously, phosphorylation of K-Cl cotransporters SLC12A4/KCC1, SLC12A5/KCC2 and SLC12A6/KCC3 inhibits its activity, blocking ion efflux. Phosphorylates WNK4, possibly regulating the activity of SLC12A3/NCC. May also phosphorylate NEDD4L. Also acts as a scaffold protein independently of its protein kinase activity: negatively regulates cell membrane localization of various transporters and channels, such as KCNJ1 and SLC26A9. Increases Ca(2+) influx mediated by TRPV5 and TRPV6 by enhancing their membrane expression level via a kinase-dependent pathway. In Mus musculus (Mouse), this protein is Serine/threonine-protein kinase WNK3.